We begin with the raw amino-acid sequence, 423 residues long: Transcription factor AP-2-epsilon (423 aa).

Positions 1 to 108 (MLVHSYSSME…EDAGLLSQPH (108 aa)) are disordered. A compositionally biased stretch (low complexity) spans 14-27 (GLSSSSPGGRLSQL). Residues 50-55 (YFPPPY) carry the PPxY motif motif. Residues 57–70 (QSSLSYSQSQDGGY) are compositionally biased toward low complexity. Residues 79–93 (SLNSLHQHQQAAWHS) show a composition bias toward polar residues. Residues 276–405 (RRKAANVTLL…YLLEALKLLD (130 aa)) form an H-S-H (helix-span-helix), dimerization region.

Belongs to the AP-2 family. As to quaternary structure, binds DNA as a dimer. Can form homodimers or heterodimers with other AP-2 family members.

It is found in the nucleus. Sequence-specific DNA-binding protein that interacts with inducible viral and cellular enhancer elements to regulate transcription of selected genes. AP-2 factors bind to the consensus sequence 5'-GCCNNNGGC-3' and activate genes involved in a large spectrum of important biological functions. The protein is Transcription factor AP-2-epsilon of Danio rerio (Zebrafish).